The primary structure comprises 379 residues: Putative clathrin assembly protein At1g68110 (379 aa).

The 133-residue stretch at 26–158 (NSSYRNADLE…SFLSDQIHRL (133 aa)) folds into the ENTH domain.

It localises to the membrane. Its subcellular location is the clathrin-coated pit. It is found in the golgi apparatus. The protein resides in the cytoplasmic vesicle. The protein localises to the clathrin-coated vesicle. The chain is Putative clathrin assembly protein At1g68110 from Arabidopsis thaliana (Mouse-ear cress).